Reading from the N-terminus, the 143-residue chain is Hemoglobin subunit alpha-1 (143 aa).

Serine 2 carries the N-acetylserine modification. The Globin domain occupies 2-143; it reads SLTEKDKAAV…VSLALAERYR (142 aa). Histidine 60 is an O2 binding site. Residue histidine 89 participates in heme b binding.

It belongs to the globin family. In terms of assembly, hb 1 is a heterotetramer of two alpha-1 and two beta chains. In terms of tissue distribution, red blood cells.

Functionally, involved in oxygen transport from gills to the various peripheral tissues. The polypeptide is Hemoglobin subunit alpha-1 (hba1) (Cottoperca gobio (Frogmouth)).